A 421-amino-acid polypeptide reads, in one-letter code: UDP-N-acetylglucosamine 1-carboxyvinyltransferase (421 aa).

Lysine 22–asparagine 23 provides a ligand contact to phosphoenolpyruvate. UDP-N-acetyl-alpha-D-glucosamine is bound at residue arginine 93. Catalysis depends on cysteine 117, which acts as the Proton donor. Cysteine 117 carries the 2-(S-cysteinyl)pyruvic acid O-phosphothioketal modification. Residues arginine 122–leucine 126, aspartate 308, and isoleucine 330 contribute to the UDP-N-acetyl-alpha-D-glucosamine site.

This sequence belongs to the EPSP synthase family. MurA subfamily.

The protein resides in the cytoplasm. The enzyme catalyses phosphoenolpyruvate + UDP-N-acetyl-alpha-D-glucosamine = UDP-N-acetyl-3-O-(1-carboxyvinyl)-alpha-D-glucosamine + phosphate. It functions in the pathway cell wall biogenesis; peptidoglycan biosynthesis. Its function is as follows. Cell wall formation. Adds enolpyruvyl to UDP-N-acetylglucosamine. In Pseudomonas putida (strain GB-1), this protein is UDP-N-acetylglucosamine 1-carboxyvinyltransferase.